Here is a 311-residue protein sequence, read N- to C-terminus: Geranylgeranyl transferase type-2 subunit alpha (311 aa).

A coiled-coil region spans residues E12–N43. PFTA repeat units follow at residues I49–K82, N93–D126, R129–L162, D164–P197, and E206–P239.

Belongs to the protein prenyltransferase subunit alpha family. As to quaternary structure, heterodimer of an alpha and a beta subunit.

The enzyme catalyses geranylgeranyl diphosphate + L-cysteinyl-[protein] = S-geranylgeranyl-L-cysteinyl-[protein] + diphosphate. Functionally, catalyzes the transfer of a geranylgeranyl moiety from geranylgeranyl diphosphate to proteins with a C-terminal sequence motif -XCC or -XCXC, where both cysteines may become modified. The protein is Geranylgeranyl transferase type-2 subunit alpha (rabggta) of Dictyostelium discoideum (Social amoeba).